Consider the following 496-residue polypeptide: Probable malate:quinone oxidoreductase (496 aa).

Belongs to the MQO family. Requires FAD as cofactor.

The catalysed reaction is (S)-malate + a quinone = a quinol + oxaloacetate. It participates in carbohydrate metabolism; tricarboxylic acid cycle; oxaloacetate from (S)-malate (quinone route): step 1/1. The polypeptide is Probable malate:quinone oxidoreductase (Prochlorococcus marinus (strain NATL1A)).